Consider the following 296-residue polypeptide: tRNA dimethylallyltransferase (296 aa).

11–18 lines the ATP pocket; it reads GPTAVGKT. 13–18 contacts substrate; sequence TAVGKT. The interaction with substrate tRNA stretch occupies residues 36–39; it reads DSQQ.

It belongs to the IPP transferase family. As to quaternary structure, monomer. Mg(2+) serves as cofactor.

It catalyses the reaction adenosine(37) in tRNA + dimethylallyl diphosphate = N(6)-dimethylallyladenosine(37) in tRNA + diphosphate. Its function is as follows. Catalyzes the transfer of a dimethylallyl group onto the adenine at position 37 in tRNAs that read codons beginning with uridine, leading to the formation of N6-(dimethylallyl)adenosine (i(6)A). The chain is tRNA dimethylallyltransferase from Streptococcus equi subsp. zooepidemicus (strain H70).